The sequence spans 448 residues: Solute carrier family 52, riboflavin transporter, member 3-A (448 aa).

3 helical membrane passes run 11 to 31 (AFGL…PLIV), 40 to 60 (LPSY…LVTL), and 73 to 93 (LAIY…AVFW). An N-linked (GlcNAc...) asparagine glycan is attached at Asn94. Transmembrane regions (helical) follow at residues 107-127 (AFFI…VTFL) and 138-158 (ITTY…VALA). N-linked (GlcNAc...) asparagine glycosylation is found at Asn168, Asn171, Asn175, and Asn194. A run of 6 helical transmembrane segments spans residues 198–218 (EIFF…FLIL), 280–300 (AFIY…LPSV), 315–335 (LSAA…MFFP), 339–359 (LVFL…NMAM), 376–396 (AIIV…KVMV), and 407–427 (ALVW…IIMF).

Belongs to the riboflavin transporter family.

It localises to the cell membrane. It carries out the reaction riboflavin(in) = riboflavin(out). Its function is as follows. Plasma membrane transporter mediating the uptake by cells of the water soluble vitamin B2/riboflavin that plays a key role in biochemical oxidation-reduction reactions of the carbohydrate, lipid, and amino acid metabolism. The chain is Solute carrier family 52, riboflavin transporter, member 3-A (slc52a3a) from Danio rerio (Zebrafish).